The chain runs to 168 residues: Endoribonuclease YbeY (168 aa).

Zn(2+) contacts are provided by H126, H130, and H136.

This sequence belongs to the endoribonuclease YbeY family. The cofactor is Zn(2+).

It localises to the cytoplasm. Functionally, single strand-specific metallo-endoribonuclease involved in late-stage 70S ribosome quality control and in maturation of the 3' terminus of the 16S rRNA. In Agrobacterium fabrum (strain C58 / ATCC 33970) (Agrobacterium tumefaciens (strain C58)), this protein is Endoribonuclease YbeY.